We begin with the raw amino-acid sequence, 265 residues long: Exosome complex component Rrp4 (265 aa).

Positions 65-137 (GDNVIGKIVD…EVNNIDLTTK (73 aa)) constitute an S1 motif domain. A KH domain is found at 147–205 (KGGQIVKITPSRVPRVIGRGGSMINMIKKLTMTRIIVGQNGWIWVSGKNDALEKLAIEA). Residues 241–265 (EIPKLEEEPQGEDEVNGNDGEARGA) form a disordered region.

This sequence belongs to the RRP4 family. In terms of assembly, component of the archaeal exosome complex. Forms a trimer of Rrp4 and/or Csl4 subunits. The trimer associates with a hexameric ring-like arrangement composed of 3 Rrp41-Rrp42 heterodimers.

Its subcellular location is the cytoplasm. Its function is as follows. Non-catalytic component of the exosome, which is a complex involved in RNA degradation. Increases the RNA binding and the efficiency of RNA degradation. Confers strong poly(A) specificity to the exosome. The sequence is that of Exosome complex component Rrp4 from Pyrococcus abyssi (strain GE5 / Orsay).